A 275-amino-acid polypeptide reads, in one-letter code: Mitochondrial fission factor homolog A (275 aa).

Residues 1–255 (MAEVNRIHYE…ENKERAKREM (255 aa)) are Cytoplasmic-facing. A disordered region spans residues 100–171 (DFLEPEPAAN…PLISPEDSQN (72 aa)). The span at 114-130 (PREEMKSHFRSRREQCR) shows a compositional bias: basic and acidic residues. Over residues 131-142 (SENSTMRRNGQI) the composition is skewed to polar residues. The stretch at 223–253 (LTDAASLRRQIIKLNRRLQLLEHENKERAKR) forms a coiled coil. The helical; Anchor for type IV membrane protein transmembrane segment at 256–273 (VMYSLTVAFWLVNSWIWL) threads the bilayer. Topologically, residues 274–275 (RR) are extracellular.

Belongs to the Tango11 family.

It localises to the mitochondrion outer membrane. Its subcellular location is the peroxisome. Plays a role in mitochondrial and peroxisomal fission. Promotes the recruitment and association of the fission mediator dynamin-related protein 1 (DNM1L) to the mitochondrial surface. This Danio rerio (Zebrafish) protein is Mitochondrial fission factor homolog A.